The sequence spans 343 residues: Sodium/bile acid cotransporter 7-B (343 aa).

Residues Met1–Lys9 lie on the Cytoplasmic side of the membrane. A helical membrane pass occupies residues Glu10–Gly30. The Extracellular portion of the chain corresponds to Glu31–Lys37. The helical transmembrane segment at Pro38 to Leu58 threads the bilayer. Residues Lys59 to Lys71 are Cytoplasmic-facing. The chain crosses the membrane as a helical span at residues Leu72 to Leu92. Residues Gln93–Pro116 are Extracellular-facing. A helical transmembrane segment spans residues Pro117–Phe137. Asn138 is a topological domain (cytoplasmic). The chain crosses the membrane as a helical span at residues Ser139–Gly159. The Extracellular portion of the chain corresponds to Ser160–Ser163. A helical membrane pass occupies residues Val164–Gly184. Over Gln185–Pro201 the chain is Cytoplasmic. A helical membrane pass occupies residues Phe202–Phe222. The Extracellular portion of the chain corresponds to Ser223–Leu234. Residues Val235–Phe255 form a helical membrane-spanning segment. The Cytoplasmic portion of the chain corresponds to Ser256–Ala270. The helical transmembrane segment at Ile271–Phe291 threads the bilayer. The Extracellular segment spans residues Ala292–Ser298. A helical membrane pass occupies residues Leu299 to Val319. Topologically, residues Pro320 to Leu343 are cytoplasmic.

It belongs to the bile acid:sodium symporter (BASS) (TC 2.A.28) family.

It is found in the cell membrane. The protein resides in the endoplasmic reticulum membrane. The protein localises to the golgi apparatus membrane. Involved in teeth and skeletal development. Has an essential role in the biosynthesis and trafficking of glycosaminoglycans and glycoproteins to produce a proper functioning extracellular matrix. Required for extracellular matrix mineralization. Also involved in the regulation of cellular calcium homeostasis. Does not show transport activity towards bile acids or steroid sulfates. The polypeptide is Sodium/bile acid cotransporter 7-B (slc10a7-b) (Xenopus laevis (African clawed frog)).